The following is a 364-amino-acid chain: Geissoschizine synthase (364 aa).

Zn(2+) is bound at residue Cys-51. Asn-52 is a binding site for NADP(+). Zn(2+) is bound by residues His-73, Glu-74, Cys-104, Cys-107, Cys-110, Cys-118, and Cys-168. NADP(+) is bound by residues Leu-194, Gly-196, Leu-197, Ser-216, Thr-217, Ser-218, Lys-221, Arg-261, Val-280, Ala-282, Ser-304, Thr-306, and Arg-351.

This sequence belongs to the zinc-containing alcohol dehydrogenase family. Class-III subfamily. Homodimer. Zn(2+) is required as a cofactor. In terms of tissue distribution, expressed in leaf epidermis.

The enzyme catalyses (19E)-geissoschizine + NADP(+) = 4,21-dehydrogeissoschizine + NADPH. It functions in the pathway alkaloid biosynthesis. Component of the seco-iridoid and derivatives monoterpenoid indole alkaloids (MIAs, e.g. catharanthine, tabersonine, vincadifformine, vindoline, vincristine, quinine and strychnine) biosynthesis pathway. During the conversion of strictosidine aglycone to geissoschizine, catalyzes iminium reduction on 4,21-dehydrogeissoschizine to produce 19E-geissoschizine, precursor of catharanthine and tabersonine derivatives. May also trigger the production of reactive intermediate used by the HL1, HL2, HL3 and HL4 to form catharanthine, vincadifformine and tabersonine. The sequence is that of Geissoschizine synthase from Catharanthus roseus (Madagascar periwinkle).